The sequence spans 101 residues: Small ribosomal subunit protein uS14 (101 aa).

This sequence belongs to the universal ribosomal protein uS14 family. In terms of assembly, part of the 30S ribosomal subunit. Contacts proteins S3 and S10.

Its function is as follows. Binds 16S rRNA, required for the assembly of 30S particles and may also be responsible for determining the conformation of the 16S rRNA at the A site. The polypeptide is Small ribosomal subunit protein uS14 (Pseudomonas putida (strain W619)).